The following is a 301-amino-acid chain: Putative dynamin-related protein 4A (301 aa).

The Dynamin-type G domain maps to Gly59 to Leu301. A G1 motif region spans residues Gly69–Ser76. A GTP-binding site is contributed by Gly69–Ser76. Residues Cys94–Arg96 form a G2 motif region. Positions Asp168 to Gly171 are G3 motif. Residues Asp168 to Ile172 and Thr237 to Asp240 contribute to the GTP site. The interval Thr237–Asp240 is G4 motif. Glu270 is a region of interest (G5 motif).

The protein belongs to the TRAFAC class dynamin-like GTPase superfamily. Dynamin/Fzo/YdjA family.

This chain is Putative dynamin-related protein 4A (DRP4A), found in Arabidopsis thaliana (Mouse-ear cress).